Here is a 599-residue protein sequence, read N- to C-terminus: Elongation factor 4 (599 aa).

The 183-residue stretch at 5–187 (NHIRNFSIIA…QIVQLVPPPE (183 aa)) folds into the tr-type G domain. GTP-binding positions include 17-22 (DHGKST) and 134-137 (NKMD).

The protein belongs to the TRAFAC class translation factor GTPase superfamily. Classic translation factor GTPase family. LepA subfamily.

The protein localises to the cell inner membrane. The enzyme catalyses GTP + H2O = GDP + phosphate + H(+). Functionally, required for accurate and efficient protein synthesis under certain stress conditions. May act as a fidelity factor of the translation reaction, by catalyzing a one-codon backward translocation of tRNAs on improperly translocated ribosomes. Back-translocation proceeds from a post-translocation (POST) complex to a pre-translocation (PRE) complex, thus giving elongation factor G a second chance to translocate the tRNAs correctly. Binds to ribosomes in a GTP-dependent manner. The chain is Elongation factor 4 from Hahella chejuensis (strain KCTC 2396).